We begin with the raw amino-acid sequence, 232 residues long: MSACQTPVIVALDFPTREAAMRLADQLDPKLCRVKVGKELFTSCASDIVEALRGKGFDVFLDLKFHDIPNTTAMAVKAAAEMGVWMVNVHCSGGLRMMAACREVLEQRTGPQPLLIGVTVLTSMEREDLAGIGLDIDPQVQVLRLAALAEKAGMDGLVCSALEAQALKAAHPSLQLVTPGIRPAGSAQDDQRRILTPRQALDAGSDYLVIGRPISQAADPAKALAAVVAELA.

Substrate-binding positions include D13, K35, 62 to 71 (DLKFHDIPNT), T122, R182, Q191, G211, and R212. Catalysis depends on K64, which acts as the Proton donor.

The protein belongs to the OMP decarboxylase family. Type 1 subfamily. Homodimer.

The catalysed reaction is orotidine 5'-phosphate + H(+) = UMP + CO2. It functions in the pathway pyrimidine metabolism; UMP biosynthesis via de novo pathway; UMP from orotate: step 2/2. Functionally, catalyzes the decarboxylation of orotidine 5'-monophosphate (OMP) to uridine 5'-monophosphate (UMP). This is Orotidine 5'-phosphate decarboxylase from Pseudomonas syringae pv. tomato (strain ATCC BAA-871 / DC3000).